We begin with the raw amino-acid sequence, 1078 residues long: Phosphatidylinositol-3,5-bisphosphate 3-phosphatase MTMR4 (1078 aa).

The Myotubularin phosphatase domain maps to D154–Y571. The interval R267–D290 is disordered. A compositionally biased stretch (low complexity) spans N270–S282. The a 1,2-diacyl-sn-glycero-3-phospho-(1D-myo-inositol-3,5-bisphosphate) site is built by N321, N346, and I347. Positions 321, 346, and 347 each coordinate a 1,2-diacyl-sn-glycero-3-phospho-(1D-myo-inositol-3-phosphate). C408 (phosphocysteine intermediate) is an active-site residue. Positions 409, 410, 411, 412, 413, 414, 450, and 454 each coordinate a 1,2-diacyl-sn-glycero-3-phospho-(1D-myo-inositol-3,5-bisphosphate). A 1,2-diacyl-sn-glycero-3-phospho-(1D-myo-inositol-3-phosphate) contacts are provided by S409, D410, G411, W412, D413, and R414. R454 contacts a 1,2-diacyl-sn-glycero-3-phospho-(1D-myo-inositol-3-phosphate). A compositionally biased stretch (polar residues) spans S629–K648. The disordered stretch occupies residues S629–N694. Residues V904–I935 are a coiled coil. Positions D960–E982 are disordered. Positions Y968 to E982 are enriched in basic and acidic residues. The FYVE-type zinc finger occupies D997 to Q1057. 8 residues coordinate Zn(2+): C1003, C1006, C1019, C1022, C1027, C1030, C1049, and C1052.

It belongs to the protein-tyrosine phosphatase family. Non-receptor class myotubularin subfamily. In terms of assembly, homooligomeric.

It localises to the early endosome membrane. The protein resides in the recycling endosome membrane. The protein localises to the late endosome membrane. Its subcellular location is the cytoplasmic vesicle. It is found in the phagosome membrane. The catalysed reaction is a 1,2-diacyl-sn-glycero-3-phospho-(1D-myo-inositol-3-phosphate) + H2O = a 1,2-diacyl-sn-glycero-3-phospho-(1D-myo-inositol) + phosphate. It catalyses the reaction a 1,2-diacyl-sn-glycero-3-phospho-(1D-myo-inositol-3,5-bisphosphate) + H2O = a 1,2-diacyl-sn-glycero-3-phospho-(1D-myo-inositol-5-phosphate) + phosphate. It carries out the reaction 1,2-dioctanoyl-sn-glycero-3-phospho-(1-D-myo-inositol-3-phosphate) + H2O = 1,2-dioctanoyl-sn-glycero-3-phospho-(1D-myo-inositol) + phosphate. The enzyme catalyses 1,2-dioctanoyl-sn-glycero-3-phospho-(1D-myo-inositol-3,5-bisphosphate) + H2O = 1,2-dioctanoyl-sn-glycero-3-phospho-(1D-myo-inositol-5-phosphate) + phosphate. In terms of biological role, lipid phosphatase that specifically dephosphorylates the D-3 position of phosphatidylinositol 3-phosphate and phosphatidylinositol 3,5-bisphosphate, generating phosphatidylinositol and phosphatidylinositol 5-phosphate. Decreases the levels of phosphatidylinositol 3-phosphate, a phospholipid found in cell membranes where it acts as key regulator of both cell signaling and intracellular membrane traffic, in a subset of endosomal membranes to negatively regulate both endocytic recycling and trafficking and/or maturation of endosomes toward lysosomes. Through phosphatidylinositol 3-phosphate turnover in phagosome membranes regulates phagocytosis and phagosome maturation. By decreasing phosphatidylinositol 3-monophosphate (PI3P) levels in immune cells it can also regulate the innate immune response. Beside its lipid phosphatase activity, can also function as a molecular adapter to regulate midbody abscission during mitotic cytokinesis. Can also negatively regulate TGF-beta and BMP signaling through Smad proteins dephosphorylation and retention in endosomes. This is Phosphatidylinositol-3,5-bisphosphate 3-phosphatase MTMR4 (mtmr4) from Xenopus laevis (African clawed frog).